The chain runs to 122 residues: Glycine cleavage system H protein (122 aa).

A Lipoyl-binding domain is found at 22 to 103 (IGIIGISDYA…AFGSWFFKVE (82 aa)). Lys63 is subject to N6-lipoyllysine.

It belongs to the GcvH family. The glycine cleavage system is composed of four proteins: P, T, L and H. (R)-lipoate is required as a cofactor.

Functionally, the glycine cleavage system catalyzes the degradation of glycine. The H protein shuttles the methylamine group of glycine from the P protein to the T protein. This is Glycine cleavage system H protein from Treponema denticola (strain ATCC 35405 / DSM 14222 / CIP 103919 / JCM 8153 / KCTC 15104).